We begin with the raw amino-acid sequence, 286 residues long: Thymidylate synthase (286 aa).

140 to 141 (RR) serves as a coordination point for dUMP. The active-site Nucleophile is cysteine 161. Residues 185–188 (RSND), asparagine 196, and 226–228 (HIY) each bind dUMP. Residue aspartate 188 coordinates (6R)-5,10-methylene-5,6,7,8-tetrahydrofolate. (6R)-5,10-methylene-5,6,7,8-tetrahydrofolate is bound at residue alanine 285.

The protein belongs to the thymidylate synthase family. Bacterial-type ThyA subfamily. In terms of assembly, homodimer.

It localises to the cytoplasm. The enzyme catalyses dUMP + (6R)-5,10-methylene-5,6,7,8-tetrahydrofolate = 7,8-dihydrofolate + dTMP. It participates in pyrimidine metabolism; dTTP biosynthesis. Its function is as follows. Catalyzes the reductive methylation of 2'-deoxyuridine-5'-monophosphate (dUMP) to 2'-deoxythymidine-5'-monophosphate (dTMP) while utilizing 5,10-methylenetetrahydrofolate (mTHF) as the methyl donor and reductant in the reaction, yielding dihydrofolate (DHF) as a by-product. This enzymatic reaction provides an intracellular de novo source of dTMP, an essential precursor for DNA biosynthesis. This Streptococcus thermophilus (strain CNRZ 1066) protein is Thymidylate synthase.